The primary structure comprises 459 residues: Putrescine aminotransferase (459 aa).

Pyridoxal 5'-phosphate-binding positions include 150-151 (GT) and Gln274. Lys300 carries the N6-(pyridoxal phosphate)lysine modification. Thr332 contacts pyridoxal 5'-phosphate.

It belongs to the class-III pyridoxal-phosphate-dependent aminotransferase family. Putrescine aminotransferase subfamily. The cofactor is pyridoxal 5'-phosphate.

It catalyses the reaction an alkane-alpha,omega-diamine + 2-oxoglutarate = an omega-aminoaldehyde + L-glutamate. It carries out the reaction putrescine + 2-oxoglutarate = 1-pyrroline + L-glutamate + H2O. The enzyme catalyses cadaverine + 2-oxoglutarate = 5-aminopentanal + L-glutamate. It functions in the pathway amine and polyamine degradation; putrescine degradation; 4-aminobutanal from putrescine (transaminase route): step 1/1. Catalyzes the aminotransferase reaction from putrescine to 2-oxoglutarate, leading to glutamate and 4-aminobutanal, which spontaneously cyclizes to form 1-pyrroline. This is the first step in one of two pathways for putrescine degradation, where putrescine is converted into 4-aminobutanoate (gamma-aminobutyrate or GABA) via 4-aminobutanal. Also functions as a cadaverine transaminase in a a L-lysine degradation pathway to succinate that proceeds via cadaverine, glutarate and L-2-hydroxyglutarate. This is Putrescine aminotransferase from Escherichia coli O6:H1 (strain CFT073 / ATCC 700928 / UPEC).